The sequence spans 219 residues: Thiopurine S-methyltransferase (219 aa).

Positions 10, 45, 66, and 130 each coordinate S-adenosyl-L-methionine.

The protein belongs to the class I-like SAM-binding methyltransferase superfamily. TPMT family.

It localises to the cytoplasm. The enzyme catalyses S-adenosyl-L-methionine + a thiopurine = S-adenosyl-L-homocysteine + a thiopurine S-methylether.. The chain is Thiopurine S-methyltransferase from Psychrobacter cryohalolentis (strain ATCC BAA-1226 / DSM 17306 / VKM B-2378 / K5).